A 367-amino-acid chain; its full sequence is Heat-inducible transcription repressor HrcA (367 aa).

Belongs to the HrcA family.

Functionally, negative regulator of class I heat shock genes (grpE-dnaK-dnaJ and groELS operons). Prevents heat-shock induction of these operons. The protein is Heat-inducible transcription repressor HrcA of Acaryochloris marina (strain MBIC 11017).